Here is a 398-residue protein sequence, read N- to C-terminus: tRNA(Ile)-lysidine synthase (398 aa).

Residue 25–30 (SGGVDS) participates in ATP binding.

The protein belongs to the tRNA(Ile)-lysidine synthase family.

Its subcellular location is the cytoplasm. The catalysed reaction is cytidine(34) in tRNA(Ile2) + L-lysine + ATP = lysidine(34) in tRNA(Ile2) + AMP + diphosphate + H(+). Ligates lysine onto the cytidine present at position 34 of the AUA codon-specific tRNA(Ile) that contains the anticodon CAU, in an ATP-dependent manner. Cytidine is converted to lysidine, thus changing the amino acid specificity of the tRNA from methionine to isoleucine. The chain is tRNA(Ile)-lysidine synthase from Francisella tularensis subsp. holarctica (strain OSU18).